A 126-amino-acid chain; its full sequence is Protein ApaG (126 aa).

An ApaG domain is found at 2–126; it reads ADKLYQMEVQ…MTLVAPRVLH (125 aa).

In Chromobacterium violaceum (strain ATCC 12472 / DSM 30191 / JCM 1249 / CCUG 213 / NBRC 12614 / NCIMB 9131 / NCTC 9757 / MK), this protein is Protein ApaG.